The primary structure comprises 216 residues: Large ribosomal subunit protein uL3 (216 aa).

The tract at residues 132-157 is disordered; sequence FRGQGASHGTQAVHRKPGSIGGCATP.

It belongs to the universal ribosomal protein uL3 family. As to quaternary structure, part of the 50S ribosomal subunit. Forms a cluster with proteins L14 and L19.

Its function is as follows. One of the primary rRNA binding proteins, it binds directly near the 3'-end of the 23S rRNA, where it nucleates assembly of the 50S subunit. The polypeptide is Large ribosomal subunit protein uL3 (Saccharopolyspora erythraea (strain ATCC 11635 / DSM 40517 / JCM 4748 / NBRC 13426 / NCIMB 8594 / NRRL 2338)).